Here is a 431-residue protein sequence, read N- to C-terminus: Enolase (431 aa).

The interval 27-47 (LESGHSGRAAVPSGASTGSRE) is disordered. A (2R)-2-phosphoglycerate-binding site is contributed by Gln-163. Glu-205 serves as the catalytic Proton donor. Mg(2+) is bound by residues Asp-242, Glu-285, and Asp-312. Lys-337, Arg-366, Ser-367, and Lys-388 together coordinate (2R)-2-phosphoglycerate. Lys-337 functions as the Proton acceptor in the catalytic mechanism.

The protein belongs to the enolase family. Mg(2+) serves as cofactor.

It localises to the cytoplasm. The protein resides in the secreted. The protein localises to the cell surface. It catalyses the reaction (2R)-2-phosphoglycerate = phosphoenolpyruvate + H2O. The protein operates within carbohydrate degradation; glycolysis; pyruvate from D-glyceraldehyde 3-phosphate: step 4/5. Catalyzes the reversible conversion of 2-phosphoglycerate (2-PG) into phosphoenolpyruvate (PEP). It is essential for the degradation of carbohydrates via glycolysis. The sequence is that of Enolase from Oleidesulfovibrio alaskensis (strain ATCC BAA-1058 / DSM 17464 / G20) (Desulfovibrio alaskensis).